The primary structure comprises 258 residues: 5'-nucleotidase SurE (258 aa).

Asp9, Asp10, Ser40, and Asn95 together coordinate a divalent metal cation.

It belongs to the SurE nucleotidase family. Requires a divalent metal cation as cofactor.

It localises to the cytoplasm. The catalysed reaction is a ribonucleoside 5'-phosphate + H2O = a ribonucleoside + phosphate. Nucleotidase that shows phosphatase activity on nucleoside 5'-monophosphates. The sequence is that of 5'-nucleotidase SurE from Nitratiruptor sp. (strain SB155-2).